The following is a 260-amino-acid chain: MATETERVGAKGGMEHSFGFTRVDETQKQSMVDSVFHSVAENYDKMNDILSLGLHRVWKNSMVAWLSPPALSHWKVLDVAGGTGDIAFRILKASRQKAHATVLDINGSMLSVGKQRAQKNGLAPLIDFVEANAEHLPFEDQSFDAYTIAFGIRNVPHIDQALREAFRVLKPGGRFLCLEFSNVEMPWLDKIYDLWSFHAIPKLGQFIANDGDAYRYLVESIRKFPKQNDFAHMIKQAGFSRVSYRNLTGAIAALHSGWKI.

Residues Thr83, Asp104, and 132–133 each bind S-adenosyl-L-methionine; that span reads NA.

The protein belongs to the class I-like SAM-binding methyltransferase superfamily. MenG/UbiE family.

It catalyses the reaction a 2-demethylmenaquinol + S-adenosyl-L-methionine = a menaquinol + S-adenosyl-L-homocysteine + H(+). The enzyme catalyses a 2-methoxy-6-(all-trans-polyprenyl)benzene-1,4-diol + S-adenosyl-L-methionine = a 5-methoxy-2-methyl-3-(all-trans-polyprenyl)benzene-1,4-diol + S-adenosyl-L-homocysteine + H(+). The protein operates within quinol/quinone metabolism; menaquinone biosynthesis; menaquinol from 1,4-dihydroxy-2-naphthoate: step 2/2. It participates in cofactor biosynthesis; ubiquinone biosynthesis. In terms of biological role, methyltransferase required for the conversion of demethylmenaquinol (DMKH2) to menaquinol (MKH2) and the conversion of 2-polyprenyl-6-methoxy-1,4-benzoquinol (DDMQH2) to 2-polyprenyl-3-methyl-6-methoxy-1,4-benzoquinol (DMQH2). The sequence is that of Ubiquinone/menaquinone biosynthesis C-methyltransferase UbiE from Bartonella tribocorum (strain CIP 105476 / IBS 506).